The sequence spans 255 residues: tRNA (guanine-N(1)-)-methyltransferase (255 aa).

S-adenosyl-L-methionine-binding positions include Gly-113 and 133 to 138; that span reads IGDYVL.

Belongs to the RNA methyltransferase TrmD family. As to quaternary structure, homodimer.

The protein localises to the cytoplasm. It catalyses the reaction guanosine(37) in tRNA + S-adenosyl-L-methionine = N(1)-methylguanosine(37) in tRNA + S-adenosyl-L-homocysteine + H(+). In terms of biological role, specifically methylates guanosine-37 in various tRNAs. The sequence is that of tRNA (guanine-N(1)-)-methyltransferase from Mannheimia succiniciproducens (strain KCTC 0769BP / MBEL55E).